Reading from the N-terminus, the 72-residue chain is Translation initiation factor IF-1 (72 aa).

The region spanning 1-72 (MSKDDSIEFE…TKGRITYRMK (72 aa)) is the S1-like domain.

It belongs to the IF-1 family. In terms of assembly, component of the 30S ribosomal translation pre-initiation complex which assembles on the 30S ribosome in the order IF-2 and IF-3, IF-1 and N-formylmethionyl-tRNA(fMet); mRNA recruitment can occur at any time during PIC assembly.

It is found in the cytoplasm. In terms of biological role, one of the essential components for the initiation of protein synthesis. Stabilizes the binding of IF-2 and IF-3 on the 30S subunit to which N-formylmethionyl-tRNA(fMet) subsequently binds. Helps modulate mRNA selection, yielding the 30S pre-initiation complex (PIC). Upon addition of the 50S ribosomal subunit IF-1, IF-2 and IF-3 are released leaving the mature 70S translation initiation complex. This Xanthomonas euvesicatoria pv. vesicatoria (strain 85-10) (Xanthomonas campestris pv. vesicatoria) protein is Translation initiation factor IF-1.